The primary structure comprises 242 residues: ATP synthase subunit a, organellar chromatophore (242 aa).

Helical transmembrane passes span 28-48 (LHGQ…VLVI), 89-109 (LPFI…GALV), 128-148 (INTT…AGLS), 193-213 (LVVG…AMFL), and 214-234 (GLFT…NYIG).

This sequence belongs to the ATPase A chain family. In terms of assembly, F-type ATPases have 2 components, CF(1) - the catalytic core - and CF(0) - the membrane proton channel. CF(1) has five subunits: alpha(3), beta(3), gamma(1), delta(1), epsilon(1). CF(0) has four main subunits: a, b, b' and c.

The protein resides in the plastid. The protein localises to the organellar chromatophore thylakoid membrane. Its function is as follows. Key component of the proton channel; it plays a direct role in the translocation of protons across the membrane. In Paulinella chromatophora, this protein is ATP synthase subunit a, organellar chromatophore.